The chain runs to 718 residues: ADP-ribosylation factor-binding protein GGA3 (718 aa).

Positions 16–146 (ATNPSNRQED…MLKRQGIVQS (131 aa)) constitute a VHS domain. Phosphoserine occurs at positions 159 and 275. Residues 171–298 (DEEKSKLLAR…VINSYKTIIE (128 aa)) form the GAT domain. The segment at 299–588 (GQIVNGEVTT…VHVPLESIKP (290 aa)) is unstructured hinge. Low complexity-rich tracts occupy residues 334 to 350 (APSNSSPALAPPTSGIP) and 360 to 369 (GPPRSRSSSQ). Positions 334-381 (APSNSSPALAPPTSGIPILPPPPQTSGPPRSRSSSQAEAPPGSDSTNN) are disordered. An Autoinhibitory motif is present at residues 387 to 391 (DEELL). Disordered regions lie at residues 395-455 (LTDP…MSQA) and 477-506 (SFMFSSGPAPALAPKAEPKGPEYPSSSTSH). Positions 589-710 (SSALPVTAYD…TELGEVDQFP (122 aa)) constitute a GAE domain.

Belongs to the GGA protein family. As to quaternary structure, monomer. Interacts with GGA1 and GGA2. Binds to clathrin and activated ARFs, such as ARF1, ARF5 and ARF6. Binds RABEP1 and RABGEF1. Interacts with the membrane proteins M6PR/CD-MPR and IGF2R/CI-MPR and the accessory proteins SYNRG, EPN4, NECAP1, NECAP2 and AFTPH/aftiphilin. Interacts with TSG101 and UBC. Interacts with ADRA2B. Interacts with NTRK1; the interaction is independent of NTRK1 activation and ubiquitination. Interacts (via VHS domain) with BACE1 (via DXXLL motif). Phosphorylated by CK2 and dephosphorylated by PP2A. Phosphorylation of GGA3 allows the internal DXXLL motif to bind the VHS domain and to inhibit the recognition of cargo signals. In terms of processing, ubiquitinated. Post-translationally, proteolytically cleaved during apoptosis by CASP3.

The protein localises to the golgi apparatus. Its subcellular location is the trans-Golgi network membrane. It localises to the endosome membrane. The protein resides in the early endosome membrane. It is found in the recycling endosome membrane. Functionally, plays a role in protein sorting and trafficking between the trans-Golgi network (TGN) and endosomes. Mediates the ARF-dependent recruitment of clathrin to the TGN and binds ubiquitinated proteins and membrane cargo molecules with a cytosolic acidic cluster-dileucine (DXXLL) motif. Its function is as follows. Plays a role in protein sorting and trafficking between the trans-Golgi network (TGN) and endosomes. Mediates the ARF-dependent recruitment of clathrin to the TGN and binds ubiquitinated proteins and membrane cargo molecules with a cytosolic acidic cluster-dileucine (DXXLL) motif. Mediates export of the GPCR receptor ADRA2B to the cell surface. Involved in BACE1 transport and sorting as well as regulation of BACE1 protein levels. Regulates retrograde transport of BACE1 from endosomes to the trans-Golgi network via interaction through the VHS motif and dependent of BACE1 phosphorylation. Modulates BACE1 protein levels independently of the interaction between VHS domain and DXXLL motif through recognition of ubiquitination. Key player in a novel DXXLL-mediated endosomal sorting machinery to the recycling pathway that targets NTRK1 to the plasma membrane. The sequence is that of ADP-ribosylation factor-binding protein GGA3 (Gga3) from Mus musculus (Mouse).